The sequence spans 166 residues: NAD(P)H-quinone oxidoreductase subunit I, chloroplastic (166 aa).

4Fe-4S ferredoxin-type domains follow at residues 55-84 (GRIHFEFDKCIACEVCVRVCPIDLPVVDWK) and 95-124 (LNYSIDFGVCIFCGNCVEYCPTNCLSMTEE). Positions 64, 67, 70, 74, 104, 107, 110, and 114 each coordinate [4Fe-4S] cluster.

The protein belongs to the complex I 23 kDa subunit family. In terms of assembly, NDH is composed of at least 16 different subunits, 5 of which are encoded in the nucleus. [4Fe-4S] cluster is required as a cofactor.

The protein localises to the plastid. It is found in the chloroplast thylakoid membrane. It carries out the reaction a plastoquinone + NADH + (n+1) H(+)(in) = a plastoquinol + NAD(+) + n H(+)(out). It catalyses the reaction a plastoquinone + NADPH + (n+1) H(+)(in) = a plastoquinol + NADP(+) + n H(+)(out). In terms of biological role, NDH shuttles electrons from NAD(P)H:plastoquinone, via FMN and iron-sulfur (Fe-S) centers, to quinones in the photosynthetic chain and possibly in a chloroplast respiratory chain. The immediate electron acceptor for the enzyme in this species is believed to be plastoquinone. Couples the redox reaction to proton translocation, and thus conserves the redox energy in a proton gradient. The polypeptide is NAD(P)H-quinone oxidoreductase subunit I, chloroplastic (Enydra sessilis (Smallray swampwort)).